The following is a 264-amino-acid chain: Indole-3-glycerol phosphate synthase (264 aa).

The protein belongs to the TrpC family.

The catalysed reaction is 1-(2-carboxyphenylamino)-1-deoxy-D-ribulose 5-phosphate + H(+) = (1S,2R)-1-C-(indol-3-yl)glycerol 3-phosphate + CO2 + H2O. It functions in the pathway amino-acid biosynthesis; L-tryptophan biosynthesis; L-tryptophan from chorismate: step 4/5. This is Indole-3-glycerol phosphate synthase from Azoarcus sp. (strain BH72).